Here is a 516-residue protein sequence, read N- to C-terminus: Effector protein hopAB1 (516 aa).

Disordered stretches follow at residues 1 to 93 and 175 to 259; these read MSGI…AQPA and RALA…DEAL. The span at 16-30 shows a compositional bias: basic and acidic residues; it reads WRADDEPVTERERDS. Over residues 31–41 the composition is skewed to polar residues; it reads SSGANLTNSPQ. Residues 81 to 90 show a composition bias toward pro residues; the sequence is PVEPRQPPEA. Low complexity-rich tracts occupy residues 183–196 and 212–224; these read PAPSRPVASSSRSS and QTSSSSQATSSTS.

It belongs to the HopAB family.

The protein localises to the secreted. Functionally, effector protein that plays different roles depending on the species and plant cultivars that interact with the pathogen. Acts as a virulence determinant by enhancing the development of disease symptoms and bacterial growth. Acts as an avirulence factor by eliciting hypersensitive response (HR) and plant resistance. The sequence is that of Effector protein hopAB1 (hopAB1) from Pseudomonas syringae pv. syringae (strain B728a).